Consider the following 380-residue polypeptide: DNA-directed RNA polymerase subunit Rpo1C (380 aa).

This sequence belongs to the RNA polymerase beta' chain family. In terms of assembly, part of the RNA polymerase complex.

The protein localises to the cytoplasm. The catalysed reaction is RNA(n) + a ribonucleoside 5'-triphosphate = RNA(n+1) + diphosphate. DNA-dependent RNA polymerase (RNAP) catalyzes the transcription of DNA into RNA using the four ribonucleoside triphosphates as substrates. Forms part of the jaw domain. The polypeptide is DNA-directed RNA polymerase subunit Rpo1C (Archaeoglobus fulgidus (strain ATCC 49558 / DSM 4304 / JCM 9628 / NBRC 100126 / VC-16)).